The sequence spans 110 residues: HIT-like protein CPn_0488/CP_0266/CPj0488/CpB0508 (110 aa).

In terms of domain architecture, HIT spans Val-3–Ala-110. The short motif at His-95–His-99 is the Histidine triad motif element.

The sequence is that of HIT-like protein CPn_0488/CP_0266/CPj0488/CpB0508 from Chlamydia pneumoniae (Chlamydophila pneumoniae).